The following is a 98-amino-acid chain: Citrate lyase acyl carrier protein (98 aa).

An O-(phosphoribosyl dephospho-coenzyme A)serine modification is found at serine 14.

It belongs to the CitD family. In terms of assembly, oligomer with a subunit composition of (alpha,beta,gamma)6.

It is found in the cytoplasm. Its function is as follows. Covalent carrier of the coenzyme of citrate lyase. This Escherichia coli O81 (strain ED1a) protein is Citrate lyase acyl carrier protein.